The sequence spans 400 residues: Mu-type opioid receptor (400 aa).

At 1 to 68 (MDSSAVPANA…CPPTGSPSMI (68 aa)) the chain is on the extracellular side. Residues Asn9, Asn12, Asn33, Asn40, and Asn48 are each glycosylated (N-linked (GlcNAc...) asparagine). The chain crosses the membrane as a helical span at residues 69-93 (TAITIMALYSIVCVVGLFGNFLVMY). Residues 94 to 106 (VIVRYTKMKTATN) lie on the Cytoplasmic side of the membrane. Residues 107–131 (IYIFNLALADALATSTLPFQSVNYL) traverse the membrane as a helical segment. At 132–142 (MGTWPFGTILC) the chain is on the extracellular side. Residues Cys142 and Cys219 are joined by a disulfide bond. Residues 143–165 (KIVISIDYYNMFTSIFTLCTMSV) traverse the membrane as a helical segment. Topologically, residues 166–185 (DRYIAVCHPVKALDFRTPRN) are cytoplasmic. Tyr168 carries the phosphotyrosine modification. The helical transmembrane segment at 186–207 (AKIVNVCNWIISSAIGLPVMFM) threads the bilayer. Residues 208–230 (ATTKYRQGSIDCTLTFSHPTWYW) lie on the Extracellular side of the membrane. A helical membrane pass occupies residues 231-255 (ENLLKICVFIFAFIMPVLIITVCYG). Over 256–279 (LMILRLKSVRMLSGSKEKDRNLRR) the chain is Cytoplasmic. A helical transmembrane segment spans residues 280-306 (ITRMVLVVVAVFIVCWTPIHIYVIIKA). At 307-314 (LVTIPETT) the chain is on the extracellular side. A helical membrane pass occupies residues 315–338 (FQTVSWHFCIALGYTNSCLNPVLY). An NPxxY; plays a role in stabilizing the activated conformation of the receptor motif is present at residues 334–338 (NPVLY). Topologically, residues 339–400 (AFLDENFKRC…NLEAETAPLP (62 aa)) are cytoplasmic. Cys353 carries the S-palmitoyl cysteine lipid modification. Ser365 carries the phosphoserine modification. Thr372 is modified (phosphothreonine). Ser377 bears the Phosphoserine mark. Position 396 is a phosphothreonine (Thr396).

It belongs to the G-protein coupled receptor 1 family. Forms homooligomers and heterooligomers with other GPCRs, such as OPRD1, OPRK1, OPRL1, NPFFR2, ADRA2A, SSTR2, CNR1 and CCR5 (probably in dimeric forms). Interacts with heterotrimeric G proteins; interaction with a heterotrimeric complex containing GNAI1, GNB1 and GNG2 stabilizes the active conformation of the receptor and increases its affinity for endomorphin-2, the synthetic opioid peptide DAMGO and for morphinan agonists. Interacts with PPL; the interaction disrupts agonist-mediated G-protein activation. Interacts (via C-terminus) with DNAJB4 (via C-terminus). Interacts with calmodulin; the interaction inhibits the constitutive activity of OPRM1; it abolishes basal and attenuates agonist-stimulated G-protein coupling. Interacts with FLNA, PLD2, RANBP9 and WLS and GPM6A. Interacts with RTP4. Interacts with SYP and GNAS. Interacts with RGS9, RGS17, RGS20, RGS4, PPP1R9B and HINT1. Post-translationally, phosphorylated. Differentially phosphorylated in basal and agonist-induced conditions. Agonist-mediated phosphorylation modulates receptor internalization. Phosphorylated by GRK2 in a agonist-dependent manner. Phosphorylation at Tyr-168 requires receptor activation, is dependent on non-receptor protein tyrosine kinase Src and results in a decrease in agonist efficacy by reducing G-protein coupling efficiency. Phosphorylated on tyrosine residues; the phosphorylation is involved in agonist-induced G-protein-independent receptor down-regulation. Phosphorylation at Ser-377 is involved in G-protein-dependent but not beta-arrestin-dependent activation of the ERK pathway. Ubiquitinated. A basal ubiquitination seems not to be related to degradation. Ubiquitination is increased upon formation of OPRM1:OPRD1 oligomers leading to proteasomal degradation; the ubiquitination is diminished by RTP4.

It is found in the cell membrane. The protein localises to the cell projection. Its subcellular location is the axon. The protein resides in the perikaryon. It localises to the dendrite. It is found in the endosome. In terms of biological role, receptor for endogenous opioids such as beta-endorphin and endomorphin. Receptor for natural and synthetic opioids including morphine, heroin, DAMGO, fentanyl, etorphine, buprenorphin and methadone. Also activated by enkephalin peptides, such as Met-enkephalin or Met-enkephalin-Arg-Phe, with higher affinity for Met-enkephalin-Arg-Phe. Agonist binding to the receptor induces coupling to an inactive GDP-bound heterotrimeric G-protein complex and subsequent exchange of GDP for GTP in the G-protein alpha subunit leading to dissociation of the G-protein complex with the free GTP-bound G-protein alpha and the G-protein beta-gamma dimer activating downstream cellular effectors. The agonist- and cell type-specific activity is predominantly coupled to pertussis toxin-sensitive G(i) and G(o) G alpha proteins, GNAI1, GNAI2, GNAI3 and GNAO1, and to a lesser extent to pertussis toxin-insensitive G alpha proteins GNAZ and GNA15. They mediate an array of downstream cellular responses, including inhibition of adenylate cyclase activity and both N-type and L-type calcium channels, activation of inward rectifying potassium channels, mitogen-activated protein kinase (MAPK), phospholipase C (PLC), phosphoinositide/protein kinase (PKC), phosphoinositide 3-kinase (PI3K) and regulation of NF-kappa-B. Also couples to adenylate cyclase stimulatory G alpha proteins. The selective temporal coupling to G-proteins and subsequent signaling can be regulated by RGSZ proteins, such as RGS9, RGS17 and RGS4. Phosphorylation by members of the GPRK subfamily of Ser/Thr protein kinases and association with beta-arrestins is involved in short-term receptor desensitization. Beta-arrestins associate with the GPRK-phosphorylated receptor and uncouple it from the G-protein thus terminating signal transduction. The phosphorylated receptor is internalized through endocytosis via clathrin-coated pits which involves beta-arrestins. The activation of the ERK pathway occurs either in a G-protein-dependent or a beta-arrestin-dependent manner and is regulated by agonist-specific receptor phosphorylation. Acts as a class A G-protein coupled receptor (GPCR) which dissociates from beta-arrestin at or near the plasma membrane and undergoes rapid recycling. Receptor down-regulation pathways are varying with the agonist and occur dependent or independent of G-protein coupling. Endogenous ligands induce rapid desensitization, endocytosis and recycling. Heterooligomerization with other GPCRs can modulate agonist binding, signaling and trafficking properties. Involved in neurogenesis. The chain is Mu-type opioid receptor (OPRM1) from Saimiri boliviensis boliviensis (Bolivian squirrel monkey).